An 841-amino-acid polypeptide reads, in one-letter code: DNA ligase (841 aa).

Residues 33 to 37, 82 to 83, and E114 each bind NAD(+); these read DAQYD and SL. K116 functions as the N6-AMP-lysine intermediate in the catalytic mechanism. NAD(+)-binding residues include R137, E174, K300, and K324. Zn(2+)-binding residues include C418, C421, C436, and C442. Residues 758-841 form the BRCT domain; the sequence is EKTGPLDGQT…AFLGEHGQQR (84 aa).

It belongs to the NAD-dependent DNA ligase family. LigA subfamily. The cofactor is Mg(2+). Mn(2+) is required as a cofactor.

It catalyses the reaction NAD(+) + (deoxyribonucleotide)n-3'-hydroxyl + 5'-phospho-(deoxyribonucleotide)m = (deoxyribonucleotide)n+m + AMP + beta-nicotinamide D-nucleotide.. In terms of biological role, DNA ligase that catalyzes the formation of phosphodiester linkages between 5'-phosphoryl and 3'-hydroxyl groups in double-stranded DNA using NAD as a coenzyme and as the energy source for the reaction. It is essential for DNA replication and repair of damaged DNA. The polypeptide is DNA ligase (Xanthomonas oryzae pv. oryzae (strain KACC10331 / KXO85)).